The sequence spans 200 residues: Early E1A 21 kDa protein (200 aa).

The tract at residues 78–98 is disordered; the sequence is QDSTTATSAEEPSASTDSISS. The LXCXE motif, interaction with host RB1 signature appears at 114 to 118; the sequence is LRCYE. A zinc finger lies at 136–151; the sequence is CSTCGGHEVNGFCSLC. Positions 196–200 match the Nuclear localization signal motif; that stretch reads SRHDE.

Interaction with host RB1 induces the aberrant dissociation of RB1-E2F1 complex thereby disrupting RB1's activity.

In terms of biological role, E1A protein has both transforming and trans-activating activities. Plays a role in viral genome replication by driving entry of quiescent cells into the cell cycle. Disrupts the function of host retinoblastoma protein RB1/pRb and isoform early E1A 26 kDa protein stabilizes TP53, which are key regulators of the cell cycle. Induces the disassembly of the E2F1 transcription factors from RB1 by direct competition for the same binding site on RB1, with subsequent transcriptional activation of E2F1-regulated S-phase genes. Inactivation of the ability of RB1 to arrest the cell cycle is critical for cellular transformation, uncontrolled cellular growth and proliferation induced by viral infection. Stimulation of progression from G1 to S phase allows the virus to efficiently use the cellular DNA replicating machinery to achieve viral genome replication. This chain is Early E1A 21 kDa protein, found in Murine adenovirus A serotype 1 (MAdV-1).